Consider the following 104-residue polypeptide: NADH-quinone oxidoreductase subunit K (104 aa).

A run of 3 helical transmembrane segments spans residues 4–24 (VPLS…LYGA), 31–51 (VIVL…LVAF), and 64–84 (IFAL…LAIL).

The protein belongs to the complex I subunit 4L family. NDH-1 is composed of 14 different subunits. Subunits NuoA, H, J, K, L, M, N constitute the membrane sector of the complex.

It is found in the cell membrane. The enzyme catalyses a quinone + NADH + 5 H(+)(in) = a quinol + NAD(+) + 4 H(+)(out). NDH-1 shuttles electrons from NADH, via FMN and iron-sulfur (Fe-S) centers, to quinones in the respiratory chain. The immediate electron acceptor for the enzyme in this species is believed to be a menaquinone. Couples the redox reaction to proton translocation (for every two electrons transferred, four hydrogen ions are translocated across the cytoplasmic membrane), and thus conserves the redox energy in a proton gradient. The sequence is that of NADH-quinone oxidoreductase subunit K from Geobacillus sp. (strain WCH70).